Consider the following 129-residue polypeptide: Small ribosomal subunit protein uS11 (129 aa).

The protein belongs to the universal ribosomal protein uS11 family. In terms of assembly, part of the 30S ribosomal subunit. Interacts with proteins S7 and S18. Binds to IF-3.

In terms of biological role, located on the platform of the 30S subunit, it bridges several disparate RNA helices of the 16S rRNA. Forms part of the Shine-Dalgarno cleft in the 70S ribosome. The chain is Small ribosomal subunit protein uS11 from Mesorhizobium japonicum (strain LMG 29417 / CECT 9101 / MAFF 303099) (Mesorhizobium loti (strain MAFF 303099)).